The chain runs to 332 residues: PTS-dependent dihydroxyacetone kinase, dihydroxyacetone-binding subunit DhaK (332 aa).

The DhaK domain occupies 9 to 331; sequence QPQDVVSEML…LNEDVKTISW (323 aa). Residues 55-58, lysine 106, and aspartate 111 contribute to the dihydroxyacetone site; that span reads GSGH. Histidine 58 acts as the Proton acceptor in catalysis. Residue histidine 220 is the Tele-hemiaminal-histidine intermediate of the active site.

Homodimer. The dihydroxyacetone kinase complex is composed of a homodimer of DhaM, a homodimer of DhaK and the subunit DhaL.

The catalysed reaction is dihydroxyacetone + phosphoenolpyruvate = dihydroxyacetone phosphate + pyruvate. Its pathway is polyol metabolism; glycerol degradation. Dihydroxyacetone binding subunit of the dihydroxyacetone kinase, which is responsible the phosphoenolpyruvate (PEP)-dependent phosphorylation of dihydroxyacetone via a phosphoryl group transfer from DhaL-ATP. The chain is PTS-dependent dihydroxyacetone kinase, dihydroxyacetone-binding subunit DhaK from Lactococcus lactis subsp. lactis (strain IL1403) (Streptococcus lactis).